The following is a 342-amino-acid chain: Nuclear distribution protein nudE homolog 1 (342 aa).

The stretch at 45–189 forms a coiled coil; the sequence is REYEAELETQ…ELAVQQKQEK (145 aa). Positions 89–157 are interaction with PAFAH1B1; that stretch reads EWYRQVSALE…ERNAFLESEL (69 aa). 2 disordered regions span residues 182–203 and 320–342; these read AVQQ…TERT and GTRP…KMLL. The segment covering 322 to 342 has biased composition (polar residues); that stretch reads RPSSTPGPMSHPSQSVVKMLL.

This sequence belongs to the nudE family. In terms of assembly, self-associates. Interacts with PAFAH1B1. Post-translationally, phosphorylated in mitosis.

The protein resides in the cytoplasm. It is found in the cytoskeleton. It localises to the microtubule organizing center. The protein localises to the centrosome. Its subcellular location is the spindle. The protein resides in the chromosome. It is found in the centromere. It localises to the kinetochore. The protein localises to the cleavage furrow. Its subcellular location is the cytoplasmic vesicle membrane. In terms of biological role, required for centrosome duplication and formation and function of the mitotic spindle. This is Nuclear distribution protein nudE homolog 1 (NDE1) from Gallus gallus (Chicken).